A 231-amino-acid chain; its full sequence is Ribonuclease 3 (231 aa).

The RNase III domain maps to 7 to 135 (IQAIESKLNF…ILGAVYLDGG (129 aa)). Residue Glu48 participates in Mg(2+) binding. Asp52 is a catalytic residue. Asn121 and Glu124 together coordinate Mg(2+). Residue Glu124 is part of the active site. The region spanning 160 to 229 (NPKNRLQQFT…AKQALSTHDN (70 aa)) is the DRBM domain.

Belongs to the ribonuclease III family. As to quaternary structure, homodimer. Mg(2+) serves as cofactor.

The protein resides in the cytoplasm. It catalyses the reaction Endonucleolytic cleavage to 5'-phosphomonoester.. Digests double-stranded RNA. Involved in the processing of primary rRNA transcript to yield the immediate precursors to the large and small rRNAs (23S and 16S). Processes some mRNAs, and tRNAs when they are encoded in the rRNA operon. Processes pre-crRNA and tracrRNA of type II CRISPR loci if present in the organism. The polypeptide is Ribonuclease 3 (Chlamydia trachomatis serovar L2 (strain ATCC VR-902B / DSM 19102 / 434/Bu)).